The primary structure comprises 93 residues: MIVEVVVMTNIEERINQIIQVLREQVVQDTAVPRNIRRAAEQAIEALQNKEKEPAVRAADAIAILEEISEDPNMPLHTRTIIWEVLGALEQIK.

Belongs to the UPF0147 family.

This is UPF0147 protein PF0239 from Pyrococcus furiosus (strain ATCC 43587 / DSM 3638 / JCM 8422 / Vc1).